Here is a 122-residue protein sequence, read N- to C-terminus: Large ribosomal subunit protein uL14 (122 aa).

The protein belongs to the universal ribosomal protein uL14 family. Part of the 50S ribosomal subunit. Forms a cluster with proteins L3 and L19. In the 70S ribosome, L14 and L19 interact and together make contacts with the 16S rRNA in bridges B5 and B8.

Binds to 23S rRNA. Forms part of two intersubunit bridges in the 70S ribosome. The protein is Large ribosomal subunit protein uL14 of Hydrogenovibrio crunogenus (strain DSM 25203 / XCL-2) (Thiomicrospira crunogena).